The primary structure comprises 497 residues: MTNRTSLNGRCPVPFLQEDLFPPTGGFIGGRYCQPVGDISCCLPCPIVSWTYGDGLFGKASSASWISVAILPLCIFLLVSYAVLPVKFTHRHYLSVCFTLGICFMEASKIAFIIPLGVKPDQCYNQITPNDMHSSLSCAFTGSLLLLGGWMVVVWSFLRTVAFHLQVCWEVILGPKFMWGALIFGWVVPAVGLTVMLILTGVSFRFGTVCHINIDGALQDYWIPIISFAVAALILQLATMAYCIHVYVKSLFDTDSTTNSSGLPSYSASVRTVSARQAYRRIRRVLQLQWRGVTLVLIIIANVIFFSVTFIELDSSLKPTAENMEKALPWVACLAATNGDREKCDPEAAKFRPSEGLLLAVLVLLSLVGFWNFILFARPSIFHGWVDFFQNKFGTGDGRLEFVSADARTRLGDTRSYEMLNSTGLPSYKSPSPMVRSPSPARMGGTKSPENGHFGRDARYVRPSMSFSSPRPPSAPQGRGWDPKTTFAPAVYREYDD.

N-linked (GlcNAc...) asparagine glycosylation occurs at asparagine 3. The next 5 helical transmembrane spans lie at 66-86 (ISVA…VLPV), 98-118 (FTLG…PLGV), 138-158 (CAFT…WSFL), 179-199 (WGAL…MLIL), and 221-241 (YWIP…ATMA). Asparagine 259 carries an N-linked (GlcNAc...) asparagine glycan. 2 helical membrane passes run 293 to 313 (VTLV…FIEL) and 357 to 377 (LLLA…ILFA). An N-linked (GlcNAc...) asparagine glycan is attached at asparagine 421. Positions 428 to 497 (YKSPSPMVRS…APAVYREYDD (70 aa)) are disordered.

It belongs to the G-protein coupled receptor GPR1/git3 family. Interacts with gpaA.

The protein localises to the cell membrane. Its function is as follows. G protein-coupled receptor that plays a role in conidiation and regulation of the biosynthesis of secondary metabolites such as dihydroxynaphthalene (DHN)-melanin, via interaction with the G-protein complex alpha subunit gpaA. The protein is G protein-coupled receptor gprM of Aspergillus fumigatus (strain CBS 144.89 / FGSC A1163 / CEA10) (Neosartorya fumigata).